We begin with the raw amino-acid sequence, 292 residues long: Oxidative stress-responsive serine-rich protein 1 (292 aa).

Residues 27–175 (SIASLSVGEG…SSDATQVSQA (149 aa)) are disordered. A compositionally biased stretch (basic residues) spans 65 to 83 (STRKSSRGVVRTQRRRRSK). A phosphothreonine mark is found at Thr-143 and Thr-233.

The polypeptide is Oxidative stress-responsive serine-rich protein 1 (OSER1) (Pongo abelii (Sumatran orangutan)).